Consider the following 37-residue polypeptide: Large ribosomal subunit protein bL36c (37 aa).

Belongs to the bacterial ribosomal protein bL36 family.

It localises to the plastid. Its subcellular location is the chloroplast. The chain is Large ribosomal subunit protein bL36c from Huperzia lucidula (Shining clubmoss).